Here is a 658-residue protein sequence, read N- to C-terminus: A-type ATP synthase subunit I (658 aa).

7 helical membrane-spanning segments follow: residues 383 to 403, 427 to 447, 475 to 495, 507 to 526, 530 to 552, 568 to 588, and 591 to 611; these read MAFV…YGII, IIMM…NGFI, ILIM…ILGA, ALGS…LYLV, IFGA…LFGL, LLAL…LTGL, and EMIP…GHIA.

Belongs to the V-ATPase 116 kDa subunit family. In terms of assembly, has multiple subunits with at least A(3), B(3), C, D, E, F, H, I and proteolipid K(x).

Its subcellular location is the cell membrane. In terms of biological role, component of the A-type ATP synthase that produces ATP from ADP in the presence of a proton gradient across the membrane. The chain is A-type ATP synthase subunit I from Methanothermobacter thermautotrophicus (strain ATCC 29096 / DSM 1053 / JCM 10044 / NBRC 100330 / Delta H) (Methanobacterium thermoautotrophicum).